Consider the following 422-residue polypeptide: Probable metallocarboxypeptidase A (422 aa).

The N-terminal stretch at 1–17 (MRSVLSLALLAANVVTA) is a signal peptide. The propeptide at 18–112 (AVVAPFDYSG…FEAYSAGYAP (95 aa)) is activation peptide. One can recognise a Peptidase M14 domain in the interval 119–419 (SYHSYQDHLS…AGTVAMLKAV (301 aa)). Zn(2+) contacts are provided by histidine 179 and glutamate 182. Substrate contacts are provided by residues 179 to 182 (HARE), arginine 237, and 254 to 255 (NR). Cysteine 248 and cysteine 271 are oxidised to a cystine. Histidine 309 serves as a coordination point for Zn(2+). 310–311 (SY) contributes to the substrate binding site. Residue glutamate 385 is the Proton donor/acceptor of the active site.

The protein belongs to the peptidase M14 family. Zn(2+) is required as a cofactor.

Its subcellular location is the secreted. In terms of biological role, extracellular metalloprotease that contributes to pathogenicity. The sequence is that of Probable metallocarboxypeptidase A (MCPA) from Arthroderma benhamiae (strain ATCC MYA-4681 / CBS 112371) (Trichophyton mentagrophytes).